The sequence spans 40 residues: Chitin-binding protein 4 (40 aa).

In terms of processing, N-glycosylated.

Chitin-binding protein. Has antifungal activity against C.krusei, C.albicans, C.tropicalis and C.parapsilosis. Has antinociceptive and anti-inflammatory activity in mice. The sequence is that of Chitin-binding protein 4 from Moringa oleifera (Horseradish tree).